Reading from the N-terminus, the 186-residue chain is Ribosome-recycling factor (186 aa).

The protein belongs to the RRF family.

The protein localises to the cytoplasm. Functionally, responsible for the release of ribosomes from messenger RNA at the termination of protein biosynthesis. May increase the efficiency of translation by recycling ribosomes from one round of translation to another. This Allorhizobium ampelinum (strain ATCC BAA-846 / DSM 112012 / S4) (Agrobacterium vitis (strain S4)) protein is Ribosome-recycling factor.